The sequence spans 625 residues: Phosphomethylpyrimidine synthase (625 aa).

Substrate contacts are provided by residues Asn-237, Met-266, Tyr-295, His-331, Ser-351–Gly-353, Asp-392–Arg-395, and Glu-431. Zn(2+) is bound at residue His-435. Position 458 (Tyr-458) interacts with substrate. His-499 contributes to the Zn(2+) binding site. Residues Cys-579, Cys-582, and Cys-587 each coordinate [4Fe-4S] cluster.

It belongs to the ThiC family. Homodimer. The cofactor is [4Fe-4S] cluster.

The enzyme catalyses 5-amino-1-(5-phospho-beta-D-ribosyl)imidazole + S-adenosyl-L-methionine = 4-amino-2-methyl-5-(phosphooxymethyl)pyrimidine + CO + 5'-deoxyadenosine + formate + L-methionine + 3 H(+). The protein operates within cofactor biosynthesis; thiamine diphosphate biosynthesis. Catalyzes the synthesis of the hydroxymethylpyrimidine phosphate (HMP-P) moiety of thiamine from aminoimidazole ribotide (AIR) in a radical S-adenosyl-L-methionine (SAM)-dependent reaction. This chain is Phosphomethylpyrimidine synthase, found in Cupriavidus metallidurans (strain ATCC 43123 / DSM 2839 / NBRC 102507 / CH34) (Ralstonia metallidurans).